A 716-amino-acid chain; its full sequence is DEAD-box ATP-dependent RNA helicase 31 (716 aa).

A disordered region spans residues 99 to 188; sequence GILKSDDEDE…LRLEDESSDE (90 aa). Residues 110–121 show a composition bias toward basic and acidic residues; sequence DRSRGRNQEKRG. Residues 144–153 show a composition bias toward polar residues; that stretch reads SRIQGKSSEA. The span at 155–188 shows a compositional bias: basic and acidic residues; sequence FRGRKETSFSRDREDEKGLRKREDLRLEDESSDE. Positions 248-276 match the Q motif motif; sequence TRFDHYPLSPLSLKAIKDAGYETMTVVQE. Positions 279–462 constitute a Helicase ATP-binding domain; it reads LPIILKGKDV…LVALRRDHEF (184 aa). ATP is bound at residue 292–299; it reads AKTGTGKT. Positions 410 to 413 match the DEAD box motif; that stretch reads DEAD. The 147-residue stretch at 497 to 643 folds into the Helicase C-terminal domain; that stretch reads LREHIMGNVD…IDPETVKKVQ (147 aa).

Belongs to the DEAD box helicase family.

It catalyses the reaction ATP + H2O = ADP + phosphate + H(+). The protein is DEAD-box ATP-dependent RNA helicase 31 (RH31) of Arabidopsis thaliana (Mouse-ear cress).